Here is a 363-residue protein sequence, read N- to C-terminus: UDP-N-acetylglucosamine--N-acetylmuramyl-(pentapeptide) pyrophosphoryl-undecaprenol N-acetylglucosamine transferase (363 aa).

Residues 12 to 14, Ser196, and Gln291 contribute to the UDP-N-acetyl-alpha-D-glucosamine site; that span reads TAG.

This sequence belongs to the glycosyltransferase 28 family. MurG subfamily.

The protein resides in the cell inner membrane. It catalyses the reaction di-trans,octa-cis-undecaprenyl diphospho-N-acetyl-alpha-D-muramoyl-L-alanyl-D-glutamyl-meso-2,6-diaminopimeloyl-D-alanyl-D-alanine + UDP-N-acetyl-alpha-D-glucosamine = di-trans,octa-cis-undecaprenyl diphospho-[N-acetyl-alpha-D-glucosaminyl-(1-&gt;4)]-N-acetyl-alpha-D-muramoyl-L-alanyl-D-glutamyl-meso-2,6-diaminopimeloyl-D-alanyl-D-alanine + UDP + H(+). Its pathway is cell wall biogenesis; peptidoglycan biosynthesis. Its function is as follows. Cell wall formation. Catalyzes the transfer of a GlcNAc subunit on undecaprenyl-pyrophosphoryl-MurNAc-pentapeptide (lipid intermediate I) to form undecaprenyl-pyrophosphoryl-MurNAc-(pentapeptide)GlcNAc (lipid intermediate II). The polypeptide is UDP-N-acetylglucosamine--N-acetylmuramyl-(pentapeptide) pyrophosphoryl-undecaprenol N-acetylglucosamine transferase (Legionella pneumophila (strain Corby)).